A 273-amino-acid chain; its full sequence is 4-hydroxy-tetrahydrodipicolinate reductase (273 aa).

NAD(+) is bound by residues 12-17 (GAGGRM) and E38. Position 39 (R39) interacts with NADP(+). NAD(+)-binding positions include 102–104 (GTT) and 126–129 (AANF). The active-site Proton donor/acceptor is H159. Residue H160 participates in (S)-2,3,4,5-tetrahydrodipicolinate binding. K163 functions as the Proton donor in the catalytic mechanism. Position 169–170 (169–170 (GT)) interacts with (S)-2,3,4,5-tetrahydrodipicolinate.

This sequence belongs to the DapB family. As to quaternary structure, homotetramer.

Its subcellular location is the cytoplasm. It carries out the reaction (S)-2,3,4,5-tetrahydrodipicolinate + NAD(+) + H2O = (2S,4S)-4-hydroxy-2,3,4,5-tetrahydrodipicolinate + NADH + H(+). It catalyses the reaction (S)-2,3,4,5-tetrahydrodipicolinate + NADP(+) + H2O = (2S,4S)-4-hydroxy-2,3,4,5-tetrahydrodipicolinate + NADPH + H(+). Its pathway is amino-acid biosynthesis; L-lysine biosynthesis via DAP pathway; (S)-tetrahydrodipicolinate from L-aspartate: step 4/4. Catalyzes the conversion of 4-hydroxy-tetrahydrodipicolinate (HTPA) to tetrahydrodipicolinate. The protein is 4-hydroxy-tetrahydrodipicolinate reductase of Salmonella gallinarum (strain 287/91 / NCTC 13346).